A 306-amino-acid chain; its full sequence is Mitochondrial basic amino acids transporter (306 aa).

The next 6 membrane-spanning stretches (helical) occupy residues 2–22 (ALDF…GHPF), 61–81 (GLGS…GVQG), 96–116 (FLAG…MELA), 153–172 (GMVS…FLTY), 187–207 (LLVP…WLST), and 255–275 (LLRA…VLTY). Solcar repeat units lie at residues 2–86 (ALDF…TLRA), 90–178 (DSPL…LTRA), and 190–275 (PKLL…VLTY). The interval 283–306 (VDSEAAPGASTTPAGPALAQPSSL) is disordered. Residues 287–306 (AAPGASTTPAGPALAQPSSL) are compositionally biased toward low complexity.

It belongs to the mitochondrial carrier (TC 2.A.29) family.

Its subcellular location is the mitochondrion inner membrane. The catalysed reaction is L-lysine(out) + L-arginine(in) = L-lysine(in) + L-arginine(out). The enzyme catalyses L-histidine(out) + L-arginine(in) = L-histidine(in) + L-arginine(out). It catalyses the reaction L-ornithine(in) + L-arginine(out) = L-ornithine(out) + L-arginine(in). It carries out the reaction L-homoarginine(in) + L-arginine(out) = L-homoarginine(out) + L-arginine(in). The catalysed reaction is N(omega)-methyl-L-arginine(in) + L-arginine(out) = N(omega)-methyl-L-arginine(out) + L-arginine(in). The enzyme catalyses L-arginine(in) = L-arginine(out). It catalyses the reaction L-lysine(in) = L-lysine(out). It carries out the reaction L-ornithine(in) = L-ornithine(out). The catalysed reaction is L-histidine(out) = L-histidine(in). Its function is as follows. Mitochondrial transporter of arginine, lysine, homoarginine, methylarginine and, to a much lesser extent, ornithine and histidine. Does not transport carnitine nor acylcarnitines. Functions by both counter-exchange and uniport mechanisms. Plays a physiological role in the import of basic amino acids into mitochondria for mitochondrial protein synthesis and amino acid degradation. In Rattus norvegicus (Rat), this protein is Mitochondrial basic amino acids transporter (Slc25a29).